Consider the following 96-residue polypeptide: UPF0235 protein YggU (96 aa).

The protein belongs to the UPF0235 family.

In Salmonella arizonae (strain ATCC BAA-731 / CDC346-86 / RSK2980), this protein is UPF0235 protein YggU.